The chain runs to 420 residues: Serine/threonine-protein phosphatase 4 regulatory subunit 2-A (420 aa).

The segment at 157-420 (GNTSAFPDRN…ETADDNMEQD (264 aa)) is disordered. Positions 182 to 195 (SLSSNVATNGLPDS) are enriched in polar residues. Residues 196–210 (TESKEQASEQSERTV) show a composition bias toward basic and acidic residues. Positions 212-224 (ESSASEAESHSGA) are enriched in low complexity. Positions 229 to 250 (HRDDEDATHAETHEAKRLKFDK) are enriched in basic and acidic residues. Over residues 251 to 266 (EEEEEEDDEEEDEDGD) the composition is skewed to acidic residues. Residues 267–276 (EIKKELDEPH) are compositionally biased toward basic and acidic residues. Residues 278-296 (PCTSVAESSSDVPQSSTDV) are compositionally biased toward polar residues. Over residues 318-332 (GVDRSTSEDSPDPSH) the composition is skewed to basic and acidic residues. Acidic residues predominate over residues 346-364 (AEEEEEEESAEAQETEETN). Residues 368–394 (SSSSNNSSDEGVSSAETPSASPSSSTE) are compositionally biased toward low complexity. Residues 411–420 (ETADDNMEQD) show a composition bias toward acidic residues.

Belongs to the PPP4R2 family. As to quaternary structure, serine/threonine-protein phosphatase 4 (PP4) occurs in different assemblies of the catalytic and one or more regulatory subunits.

In terms of biological role, regulatory subunit of serine/threonine-protein phosphatase 4 (PP4C). This is Serine/threonine-protein phosphatase 4 regulatory subunit 2-A (ppp4r2a) from Danio rerio (Zebrafish).